A 344-amino-acid polypeptide reads, in one-letter code: Protein pelota homolog (344 aa).

Belongs to the eukaryotic release factor 1 family. Pelota subfamily. As to quaternary structure, monomer. The cofactor is a divalent metal cation.

Its subcellular location is the cytoplasm. In terms of biological role, may function in recognizing stalled ribosomes, interact with stem-loop structures in stalled mRNA molecules, and effect endonucleolytic cleavage of the mRNA. May play a role in the release non-functional ribosomes and degradation of damaged mRNAs. Has endoribonuclease activity. The sequence is that of Protein pelota homolog from Saccharolobus islandicus (strain M.16.27) (Sulfolobus islandicus).